The following is a 27-amino-acid chain: L-amino-acid oxidase (27 aa).

As to quaternary structure, homodimer; non-covalently linked. Requires FAD as cofactor. In terms of processing, contains 2 disulfide bonds. N-glycosylated. In terms of tissue distribution, expressed by the venom gland.

It is found in the secreted. It carries out the reaction an L-alpha-amino acid + O2 + H2O = a 2-oxocarboxylate + H2O2 + NH4(+). The enzyme catalyses L-leucine + O2 + H2O = 4-methyl-2-oxopentanoate + H2O2 + NH4(+). In terms of biological role, catalyzes an oxidative deamination of predominantly hydrophobic and aromatic L-amino acids, thus producing hydrogen peroxide that may contribute to the diverse toxic effects of this enzyme. Shows activity on L-Leu. Exhibits diverse biological activities, such as hemolysis, edema, apoptosis, as well as induction of platelet aggregation. Effects of snake L-amino oxidases on platelets are controversial, since they either induce aggregation or inhibit agonist-induced aggregation. These different effects are probably due to different experimental conditions. Unlike other snake venom L-amino acid oxidases, does not induce hemorrhage. This protein may also have antibacterial and antiparasitic activities. The polypeptide is L-amino-acid oxidase (Eristicophis macmahoni (Leaf-nosed viper)).